Consider the following 326-residue polypeptide: Protein TMED8 (326 aa).

The tract at residues 1–80 (MSDLQAAEGP…VSPGSKDATE (80 aa)) is disordered. The 165-residue stretch at 160-324 (PPCIWTFAKV…NKTLYFHIYY (165 aa)) folds into the GOLD domain. Residue lysine 170 is modified to N6-acetyllysine. Positions 238-268 (DSCDDEDEEEEEEEEIEEPVPAGDVERGSRS) are disordered. Acidic residues predominate over residues 239–255 (SCDDEDEEEEEEEEIEE).

This is Protein TMED8 (TMED8) from Pongo abelii (Sumatran orangutan).